Consider the following 39-residue polypeptide: Photosystem II reaction center protein Y (39 aa).

The chain crosses the membrane as a helical span at residues 5–23; that stretch reads VLVVVGPLLIAASWAVFNI.

The protein belongs to the PsbY family. As to quaternary structure, PSII is composed of 1 copy each of membrane proteins PsbA, PsbB, PsbC, PsbD, PsbE, PsbF, PsbH, PsbI, PsbJ, PsbK, PsbL, PsbM, PsbT, PsbX, PsbY, PsbZ, Psb30/Ycf12, peripheral proteins PsbO, CyanoQ (PsbQ), PsbU, PsbV and a large number of cofactors. It forms dimeric complexes.

It localises to the cellular thylakoid membrane. Functionally, loosely associated component of the core of photosystem II (PSII), it is not always seen in crystals. PSII is a light-driven water plastoquinone oxidoreductase, using light energy to abstract electrons from H(2)O, generating a proton gradient subsequently used for ATP formation. This is Photosystem II reaction center protein Y from Rippkaea orientalis (strain PCC 8801 / RF-1) (Cyanothece sp. (strain PCC 8801)).